Consider the following 325-residue polypeptide: Probable tRNA-dihydrouridine synthase 2 (325 aa).

An FMN-binding site is contributed by 18 to 20 (PME). C105 (proton donor) is an active-site residue. FMN is bound by residues K143, 208–210 (NGD), and 232–233 (GR).

The protein belongs to the Dus family. The cofactor is FMN.

It catalyses the reaction a 5,6-dihydrouridine in tRNA + NAD(+) = a uridine in tRNA + NADH + H(+). The catalysed reaction is a 5,6-dihydrouridine in tRNA + NADP(+) = a uridine in tRNA + NADPH + H(+). Its function is as follows. Catalyzes the synthesis of 5,6-dihydrouridine (D), a modified base found in the D-loop of most tRNAs, via the reduction of the C5-C6 double bond in target uridines. This Bacillus subtilis (strain 168) protein is Probable tRNA-dihydrouridine synthase 2 (dus2).